Here is a 154-residue protein sequence, read N- to C-terminus: Cyclin-dependent protein kinase inhibitor SMR11 (154 aa).

Positions 1–44 (MEQEEPCEAKETASSSIEPKTPNPNVPDSIPAIDSDSSLSEEEI) are disordered. The span at 27–38 (PDSIPAIDSDSS) shows a compositional bias: low complexity.

As to quaternary structure, interacts with CYCB2-4.

In terms of biological role, probable cyclin-dependent protein kinase (CDK) inhibitor that functions as a repressor of mitosis in the endoreduplication cell cycle. The protein is Cyclin-dependent protein kinase inhibitor SMR11 of Arabidopsis thaliana (Mouse-ear cress).